We begin with the raw amino-acid sequence, 155 residues long: Large ribosomal subunit protein bL9c (155 aa).

Belongs to the bacterial ribosomal protein bL9 family.

It localises to the plastid. The protein localises to the chloroplast. Its function is as follows. Binds to the 23S rRNA. The polypeptide is Large ribosomal subunit protein bL9c (Porphyra purpurea (Red seaweed)).